The sequence spans 257 residues: Folate receptor alpha (257 aa).

Residues 1–24 (MAQRMTTQLLLLLVWVAVVGEAQT) form the signal peptide. Cystine bridges form between Cys37–Cys65, Cys57–Cys105, Cys66–Cys109, Cys89–Cys175, Cys96–Cys146, Cys135–Cys209, Cys139–Cys189, and Cys152–Cys169. Asn69 carries an N-linked (GlcNAc...) asparagine glycan. Folate contacts are provided by residues Asp103, Tyr107, 124–128 (WRKER), 157–162 (HKGWNW), and Ser196. A glycan (N-linked (GlcNAc...) asparagine) is linked at Asn161. A glycan (N-linked (GlcNAc...) asparagine) is linked at Asn201. Ser234 carries GPI-anchor amidated serine lipidation. The propeptide at 235–257 (GAGPWAAWPFLLSLALMLLWLLS) is removed in mature form.

This sequence belongs to the folate receptor family. Post-translationally, the secreted form is derived from the membrane-bound form either by cleavage of the GPI anchor, or/and by proteolysis catalyzed by a metalloprotease. In terms of tissue distribution, primarily expressed in tissues of epithelial origin. Expression is increased in malignant tissues. Expressed in kidney, lung and cerebellum. Detected in placenta and thymus epithelium.

The protein localises to the cell membrane. It localises to the apical cell membrane. It is found in the basolateral cell membrane. Its subcellular location is the secreted. The protein resides in the cytoplasmic vesicle. The protein localises to the clathrin-coated vesicle. It localises to the endosome. In terms of biological role, binds to folate and reduced folic acid derivatives and mediates delivery of 5-methyltetrahydrofolate and folate analogs into the interior of cells. Has high affinity for folate and folic acid analogs at neutral pH. Exposure to slightly acidic pH after receptor endocytosis triggers a conformation change that strongly reduces its affinity for folates and mediates their release. Required for normal embryonic development and normal cell proliferation. This Homo sapiens (Human) protein is Folate receptor alpha (FOLR1).